A 541-amino-acid polypeptide reads, in one-letter code: Beta-glucuronidase (541 aa).

The N-terminal stretch at 1–20 (MHHHPITLLSLLLGAAQSIA) is a signal peptide. Asn69, Asn115, and Asn157 each carry an N-linked (GlcNAc...) asparagine glycan. Catalysis depends on Glu208, which acts as the Proton donor. 3 N-linked (GlcNAc...) asparagine glycosylation sites follow: Asn217, Asn291, and Asn304. The Nucleophile role is filled by Glu324. Residues Asn380, Asn426, Asn441, Asn483, and Asn512 are each glycosylated (N-linked (GlcNAc...) asparagine).

This sequence belongs to the glycosyl hydrolase 79 family. Post-translationally, N-glycosylated.

The protein localises to the secreted. The catalysed reaction is a beta-D-glucuronoside + H2O = D-glucuronate + an alcohol. In terms of biological role, beta-glucuronidase that hydrolyzes beta-glucuronosyl and 4-O-methyl-beta-glucuronosyl residues of arabinogalactan-protein. Hydrolyzed heparan sulfate only very weakly. Has no activity on xylan from birchwood. Able to catalyze the transglycosylation of glucuronic acid (GlcA) residues from p-nitrophenyl-beta-glucuronic acid (PNP beta-GlcA) to various monosaccharide acceptors such as glucose, galactose and xylose. The polypeptide is Beta-glucuronidase (Aspergillus niger (strain ATCC MYA-4892 / CBS 513.88 / FGSC A1513)).